Consider the following 253-residue polypeptide: Ubiquinone/menaquinone biosynthesis C-methyltransferase UbiE (253 aa).

Residues Thr76, Asp97, Asn125–Ala126, and Ser142 each bind S-adenosyl-L-methionine.

It belongs to the class I-like SAM-binding methyltransferase superfamily. MenG/UbiE family.

The enzyme catalyses a 2-demethylmenaquinol + S-adenosyl-L-methionine = a menaquinol + S-adenosyl-L-homocysteine + H(+). It carries out the reaction a 2-methoxy-6-(all-trans-polyprenyl)benzene-1,4-diol + S-adenosyl-L-methionine = a 5-methoxy-2-methyl-3-(all-trans-polyprenyl)benzene-1,4-diol + S-adenosyl-L-homocysteine + H(+). It participates in quinol/quinone metabolism; menaquinone biosynthesis; menaquinol from 1,4-dihydroxy-2-naphthoate: step 2/2. The protein operates within cofactor biosynthesis; ubiquinone biosynthesis. Methyltransferase required for the conversion of demethylmenaquinol (DMKH2) to menaquinol (MKH2) and the conversion of 2-polyprenyl-6-methoxy-1,4-benzoquinol (DDMQH2) to 2-polyprenyl-3-methyl-6-methoxy-1,4-benzoquinol (DMQH2). This Xylella fastidiosa (strain 9a5c) protein is Ubiquinone/menaquinone biosynthesis C-methyltransferase UbiE.